The following is a 211-amino-acid chain: MRIGILGGTFDPIHLGHINPALDVKQQLHLDQIWLMPNHIPPHKNTTVVSTHHRLEMVKLVCQQYPEFKLCDIEINRDTPSYSVTTLTLLTQQYPDDEFFFIMGMDSFVQLPLWYQWQSLFNLCHIALCQRPGWAMDTNSEMTKELLFRQATADYLDSPSHAKNGRIFTINSQLVDISSTEIRQQLAQNIDISTVLSQTTTEYIRQHQLYR.

Belongs to the NadD family.

The enzyme catalyses nicotinate beta-D-ribonucleotide + ATP + H(+) = deamido-NAD(+) + diphosphate. Its pathway is cofactor biosynthesis; NAD(+) biosynthesis; deamido-NAD(+) from nicotinate D-ribonucleotide: step 1/1. Functionally, catalyzes the reversible adenylation of nicotinate mononucleotide (NaMN) to nicotinic acid adenine dinucleotide (NaAD). This chain is Probable nicotinate-nucleotide adenylyltransferase, found in Shewanella frigidimarina (strain NCIMB 400).